Consider the following 182-residue polypeptide: Large ribosomal subunit protein uL15 (182 aa).

The segment at 1-52 is disordered; it reads MDLSSLRPAKGAVKNKKRIGRGPGSGNGTTAGKGNKGQQSRSGYTRPVSEGG. The segment covering 21-35 has biased composition (gly residues); it reads RGPGSGNGTTAGKGN.

Belongs to the universal ribosomal protein uL15 family. Part of the 50S ribosomal subunit.

In terms of biological role, binds to the 23S rRNA. The sequence is that of Large ribosomal subunit protein uL15 from Chlorobium phaeobacteroides (strain BS1).